The sequence spans 380 residues: Protein neprosin (380 aa).

The first 24 residues, 1–24 (MQAKFFTFVILSSVFYFNYPLAEA), serve as a signal peptide directing secretion. A propeptide spans 25 to 128 (RSIQARLANK…QFPNLKFAPP (104 aa)) (activation peptide). Cys52 and Cys98 are oxidised to a cystine. Asn68, Asn145, and Asn152 each carry an N-linked (GlcNAc...) asparagine glycan. In terms of domain architecture, Neprosin PEP catalytic spans 129–380 (SANTNHQYAV…YLFYGGPGCQ (252 aa)). Glu188 is a catalytic residue. A disulfide bridge connects residues Cys219 and Cys224. N-linked (GlcNAc...) asparagine glycosylation occurs at Asn253. Glu297 is a catalytic residue. Cys358 and Cys379 are oxidised to a cystine.

Belongs to the peptidase G3 family.

The protein resides in the secreted. It carries out the reaction Hydrolysis of Pro-|-Xaa &gt;&gt; Ala-|-Xaa in oligopeptides.. Weakly inhibited by the aspartic protease inhibitor pepstatin. Weakly inhibited by pepstatin A (IC(50) of 140 uM) and 1,2-epoxy-3-(p-nitrophenoxy)propane (EPNP) (IC(50) of 480 uM). Activity is not affected by the POP inhibitor Z-Pro-prolinal inhibitor or the denaturant urea. Functionally, glutamic endopeptidase that preferentially cleaves peptide bonds on the C-terminal side of proline residues. Also cleaves peptide bonds on the C-terminal side of alanine residues but with less efficiency. In contrast to most proline-cleaving enzymes, effectively degrades proteins of any size. Found in the viscoelastic fluid of the pitcher, and so likely functions in the digestion of their prey. This chain is Protein neprosin, found in Nepenthes x ventrata (Red tropical pitcher plant).